Here is a 366-residue protein sequence, read N- to C-terminus: MAEQLKELAEMVESFGTAPTMGEMPCRTLATKGINGPTAAHVIEEIHTPFNLAYVTFTTGSTAFQNVVGVTHSEIDGRVRASLAAFDMANVERHGKFLVTYAPLVNVFSAEALKIHGLDWFFLQRSSRDAFLLSLCQEKPNVLIGESTFIRSALEDASVLGLSHSIPQGVIAFTAGTPLDLDLLQVAEKHNWKIHDLYGCQEFGWLTLDGVPLRADITLIPSPKGSDFREFVVGGLPMADSFPYAESGHVCNPEGKIITYRRARTNPEYEVIVRETKLSSKETTERVARTILRIKGRVVKVDPALKVSSTKTVLDLVPSVSAEGKSTSESYRIEGDDKTFLFETLIEAQLALQQTAKTDQVWKKTR.

The protein localises to the cytoplasm. It catalyses the reaction holo-[ACP] + acetate + ATP = acetyl-[ACP] + AMP + diphosphate. In terms of biological role, acyl-carrier protein (ACP) acetate ligase of the biotin-dependent malonate decarboxylase multienzyme complex (EC 7.2.4.4). Involved in the conversion of the thiol group of the ACP-bound 2'-(5-phosphoribosyl)-3'-dephospho-CoA prosthetic group into its acetyl thioester using the energy from the hydrolysis of ATP. The polypeptide is ACP-SH:acetate ligase (madH) (Malonomonas rubra).